The primary structure comprises 103 residues: Nucleoid-associated protein Adeh_3636 (103 aa).

This sequence belongs to the YbaB/EbfC family. In terms of assembly, homodimer.

The protein resides in the cytoplasm. The protein localises to the nucleoid. Its function is as follows. Binds to DNA and alters its conformation. May be involved in regulation of gene expression, nucleoid organization and DNA protection. This chain is Nucleoid-associated protein Adeh_3636, found in Anaeromyxobacter dehalogenans (strain 2CP-C).